The chain runs to 435 residues: MRLLLIFTVIFVFYLAILKRDVNAQQQGIDSEEGDAETFFNRTYSAHQSDLEKRIFRGYDIKKRPVKNASVPTVVDVHWHVIHVSINQKEQTMTLHGHIYMRWYDEYLVWDPKDFAGIHYARVKKWQVWQPKIRVSNSASGLASAFDFSTSAHVIIQMVEKDRAKVEMYPTFSIKVGCMFDFGDFPYDQNKCSVNLFATDTMAEVQLQNLYNIPPTLSFGWEEQKMKRIISDFKILNVSASQFYYGSGNVSKTAPVTGFELGNTWSMLAVNVDFVRHSPYFWSTIVAPTLVCTMFIQVSFFAPTVSLAFVINLMAIYLEFMFLQDITIKIPLYLSKRPSSITLFHILLISNIVSAVFHGVLCALCSTKVPVPLPIRKIYAVKDYVPASWKEEGMVVDYACDTNWTEWTRTARPLAGLAMFVYFVIMFILYLVVRI.

The first 24 residues, 1–24 (MRLLLIFTVIFVFYLAILKRDVNA), serve as a signal peptide directing secretion. Asn41, Asn68, Asn237, and Asn249 each carry an N-linked (GlcNAc...) asparagine glycan. The next 2 membrane-spanning stretches (helical) occupy residues 298 to 318 (VSFF…AIYL) and 341 to 361 (ITLF…HGVL). N-linked (GlcNAc...) asparagine glycosylation occurs at Asn403. A helical membrane pass occupies residues 413–433 (PLAGLAMFVYFVIMFILYLVV).

It belongs to the ligand-gated ion channel (TC 1.A.9) family. Acetylcholine receptor (TC 1.A.9.1) subfamily.

It is found in the cytoplasmic vesicle membrane. Thought to regulate endocytosis in coelomocytes through modulation of phospholipase C activity. Possible acetylcholine receptor. The polypeptide is Acetylcholine receptor-like protein cup-4 (Caenorhabditis briggsae).